The primary structure comprises 208 residues: GTP-binding protein Rho1 (208 aa).

19–26 contacts GTP; the sequence is GDGACGKT. The Effector region motif lies at 41–49; the sequence is YVPTVFDNY. GTP-binding positions include 66–70 and 124–127; these read DTAGQ and CKAD. The tract at residues 188-208 is disordered; sequence GKQGKSKPKTKSSKKKKCVVL. Residues 191 to 208 show a composition bias toward basic residues; sequence GKSKPKTKSSKKKKCVVL. At C205 the chain carries Cysteine methyl ester. C205 carries the S-geranylgeranyl cysteine lipid modification. The propeptide at 206–208 is removed in mature form; the sequence is VVL.

Belongs to the small GTPase superfamily. Rho family.

Its subcellular location is the cell membrane. This Kluyveromyces lactis (strain ATCC 8585 / CBS 2359 / DSM 70799 / NBRC 1267 / NRRL Y-1140 / WM37) (Yeast) protein is GTP-binding protein Rho1 (RHO1).